Reading from the N-terminus, the 314-residue chain is Leucine-rich repeat-containing protein 59 (314 aa).

Residues 1-247 (MNKGKIENIK…VPKAKRSICS (247 aa)) lie on the Cytoplasmic side of the membrane. 5 LRR repeats span residues 14 to 35 (DGNELDLSLSNLTEVPVKELAA), 38 to 60 (KATFLDLSCNNLITLTPEFCSLT), 61 to 82 (HLIKIDLNKNQLVCLPEEIGQL), 84 to 106 (NLQHLDLYNNKLKMLPIGFSQLK), and 107 to 126 (SLKWLDLKDNPLEPTLAKAA). The stretch at 146–216 (MKVLQEEAEK…AVAAQEQQKK (71 aa)) forms a coiled coil. 2 disordered regions span residues 165 to 197 (REQEKKKEAKQREKEAREKEAQKKKKAEEKERK) and 212 to 237 (EQQKKKKEEKKKKAAQNQGKKAAPES). Positions 215-225 (KKKKEEKKKKA) are enriched in basic residues. Residues 248–268 (LFFSLLLKLVLLLVIGVSSVV) traverse the membrane as a helical segment. The Lumenal portion of the chain corresponds to 269 to 314 (AVCQLTELRKEAFCIPLNVHFEETVRWAQGLDVVQQVIQKMSDLRT).

Interacts with SGO1.

Its subcellular location is the microsome membrane. It localises to the endoplasmic reticulum membrane. It is found in the nucleus envelope. Its function is as follows. Required for nuclear import of FGF1. In Danio rerio (Zebrafish), this protein is Leucine-rich repeat-containing protein 59 (lrrc59).